We begin with the raw amino-acid sequence, 860 residues long: Alanine--tRNA ligase (860 aa).

The Zn(2+) site is built by histidine 563, histidine 567, cysteine 665, and histidine 669. The disordered stretch occupies residues 824 to 843 (VGGKGGGRPDMAQAGGTDSS).

It belongs to the class-II aminoacyl-tRNA synthetase family. Requires Zn(2+) as cofactor.

Its subcellular location is the cytoplasm. The catalysed reaction is tRNA(Ala) + L-alanine + ATP = L-alanyl-tRNA(Ala) + AMP + diphosphate. Functionally, catalyzes the attachment of alanine to tRNA(Ala) in a two-step reaction: alanine is first activated by ATP to form Ala-AMP and then transferred to the acceptor end of tRNA(Ala). Also edits incorrectly charged Ser-tRNA(Ala) and Gly-tRNA(Ala) via its editing domain. The protein is Alanine--tRNA ligase of Vibrio vulnificus (strain YJ016).